Consider the following 483-residue polypeptide: Phosphoglucosamine mutase (483 aa).

The Phosphoserine intermediate role is filled by Ser-131. Mg(2+)-binding residues include Ser-131, Asp-272, Asp-274, and Asp-276. Ser-131 is subject to Phosphoserine.

It belongs to the phosphohexose mutase family. Requires Mg(2+) as cofactor. Activated by phosphorylation.

The catalysed reaction is alpha-D-glucosamine 1-phosphate = D-glucosamine 6-phosphate. Its function is as follows. Catalyzes the conversion of glucosamine-6-phosphate to glucosamine-1-phosphate. This chain is Phosphoglucosamine mutase, found in Magnetococcus marinus (strain ATCC BAA-1437 / JCM 17883 / MC-1).